The chain runs to 164 residues: uncharacterized protein (164 aa).

The signal sequence occupies residues 1–18 (MILILTIIVGFLIYFVTA). N88 carries N-linked (GlcNAc...) asparagine; by host glycosylation.

It belongs to the IIV-6 357R family.

This is an uncharacterized protein from Acheta domesticus (House cricket).